The following is a 228-amino-acid chain: Venom allergen 5 (228 aa).

The N-terminal stretch at 1-22 (MTKIDLLARVFVIATIIALATA) is a signal peptide. Disulfide bonds link C30–C124, C51–C117, and C195–C212. Residues 69-214 (KEHNDYGHKV…WNKHFLVCNY (146 aa)) enclose the SCP domain.

This sequence belongs to the CRISP family. Venom allergen 5-like subfamily. In terms of tissue distribution, expressed by the venom gland.

Its subcellular location is the secreted. The sequence is that of Venom allergen 5 from Rhynchium brunneum (Potter wasp).